The primary structure comprises 95 residues: UPF0213 protein PEPE_0875 (95 aa).

Residues 7–82 enclose the GIY-YIG domain; the sequence is NGFYFYVLRC…KQRTRSSKIK (76 aa).

The protein belongs to the UPF0213 family.

In Pediococcus pentosaceus (strain ATCC 25745 / CCUG 21536 / LMG 10740 / 183-1w), this protein is UPF0213 protein PEPE_0875.